Here is a 170-residue protein sequence, read N- to C-terminus: MDTQRDSPSLGRWSLVLLLLGLVMPLAIVAQVLSYQEAVLRAIDGINQRSSDANLYRLLDLDPRPTMDGDPDTPKPVSFTVKETVCPRTTQQSPEDCDFKKDGLVKRCMGTVTLNQARDSFDISCDKDNRRFALLGNFFRKAREKIGKEFKRIVQRIKDFLQHLVPRTEA.

An N-terminal signal peptide occupies residues 1–30; the sequence is MDTQRDSPSLGRWSLVLLLLGLVMPLAIVA. A propeptide spans 31–131 (cathelin-like domain (CLD)); it reads QVLSYQEAVL…DISCDKDNRR (101 aa). 2 disulfides stabilise this stretch: cysteine 86/cysteine 97 and cysteine 108/cysteine 125. The tract at residues 150 to 162 is active core; it reads FKRIVQRIKDFLQ.

The protein belongs to the cathelicidin family. Monomer, homodimer or homotrimer (in vitro). Oligomerizes as tetra- or hexamer in solution (in vitro). Post-translationally, proteolytically cleaved by proteinase PRTN3 into antibacterial peptide LL-37. Proteolytically cleaved by cathepsin CTSG and neutrophil elastase ELANE. Resistant to proteolytic degradation in solution, and when bound to both zwitterionic (mimicking mammalian membranes) and negatively charged membranes (mimicking bacterial membranes). In terms of processing, after secretion onto the skin surface, the CAMP gene product is processed by a serine protease-dependent mechanism into multiple novel antimicrobial peptides distinct from and shorter than cathelicidin LL-37. These peptides show enhanced antimicrobial action, acquiring the ability to kill skin pathogens such as S.aureus, E.coli and C.albicans. These peptides have lost the ability to stimulate CXCL8/IL8 release from keratinocytes. The peptides act synergistically, killing bacteria at lower concentrations when present together, and maintain activity at increased salt condition.

It localises to the secreted. The protein localises to the vesicle. Its function is as follows. Antimicrobial protein that is an integral component of the innate immune system. Binds to bacterial lipopolysaccharides (LPS). Acts via neutrophil N-formyl peptide receptors to enhance the release of CXCL2. Postsecretory processing generates multiple cathelicidin antimicrobial peptides with various lengths which act as a topical antimicrobial defense in sweat on skin. The unprocessed precursor form, cathelicidin antimicrobial peptide, inhibits the growth of Gram-negative E.coli and E.aerogenes with efficiencies comparable to that of the mature peptide LL-37 (in vitro). Antimicrobial peptide that is an integral component of the innate immune system. Binds to bacterial lipopolysaccharides (LPS). Causes membrane permeabilization by forming transmembrane pores (in vitro). Causes lysis of E.coli. Exhibits antimicrobial activity against Gram-negative bacteria such as P.aeruginosa, S.typhimurium, E.aerogenes, E.coli and P.syringae, Gram-positive bacteria such as L.monocytogenes, S.epidermidis, S.pyogenes and S.aureus, as well as vancomycin-resistant enterococci (in vitro). Exhibits antimicrobial activity against methicillin-resistant S.aureus, P.mirabilis, and C.albicans in low-salt media, but not in media containing 100 mM NaCl (in vitro). Forms chiral supramolecular assemblies with quinolone signal (PQS) molecules of P.aeruginosa, which may lead to interference of bacterial quorum signaling and perturbance of bacterial biofilm formation. May form supramolecular fiber-like assemblies on bacterial membranes. Induces cytokine and chemokine producation as well as TNF/TNFA and CSF2/GMCSF production in normal human keratinocytes. Exhibits hemolytic activity against red blood cells. Functionally, exhibits antimicrobial activity against E.coli and B.megaterium (in vitro). In Nomascus leucogenys (Northern white-cheeked gibbon), this protein is Cathelicidin antimicrobial peptide.